Reading from the N-terminus, the 496-residue chain is Aspartyl/glutamyl-tRNA(Asn/Gln) amidotransferase subunit B (496 aa).

It belongs to the GatB/GatE family. GatB subfamily. Heterotrimer of A, B and C subunits.

It carries out the reaction L-glutamyl-tRNA(Gln) + L-glutamine + ATP + H2O = L-glutaminyl-tRNA(Gln) + L-glutamate + ADP + phosphate + H(+). The catalysed reaction is L-aspartyl-tRNA(Asn) + L-glutamine + ATP + H2O = L-asparaginyl-tRNA(Asn) + L-glutamate + ADP + phosphate + 2 H(+). Its function is as follows. Allows the formation of correctly charged Asn-tRNA(Asn) or Gln-tRNA(Gln) through the transamidation of misacylated Asp-tRNA(Asn) or Glu-tRNA(Gln) in organisms which lack either or both of asparaginyl-tRNA or glutaminyl-tRNA synthetases. The reaction takes place in the presence of glutamine and ATP through an activated phospho-Asp-tRNA(Asn) or phospho-Glu-tRNA(Gln). This chain is Aspartyl/glutamyl-tRNA(Asn/Gln) amidotransferase subunit B, found in Nitrosospira multiformis (strain ATCC 25196 / NCIMB 11849 / C 71).